The primary structure comprises 252 residues: ATP synthase subunit a (252 aa).

The next 7 membrane-spanning stretches (helical) occupy residues 6–26 (LEQF…YFSF), 31–51 (LFML…TLNG), 88–108 (FFPL…IGMI), 117–137 (HFII…IVGF), 144–164 (FFSI…LVLL), 190–212 (LVKI…YLGQ), and 225–245 (LELG…CIYL).

It belongs to the ATPase A chain family. F-type ATPases have 2 components, CF(1) - the catalytic core - and CF(0) - the membrane proton channel. CF(1) has five subunits: alpha(3), beta(3), gamma(1), delta(1), epsilon(1). CF(0) has three main subunits: a, b and c.

Its subcellular location is the mitochondrion inner membrane. In terms of biological role, mitochondrial membrane ATP synthase (F(1)F(0) ATP synthase or Complex V) produces ATP from ADP in the presence of a proton gradient across the membrane which is generated by electron transport complexes of the respiratory chain. F-type ATPases consist of two structural domains, F(1) - containing the extramembraneous catalytic core and F(0) - containing the membrane proton channel, linked together by a central stalk and a peripheral stalk. During catalysis, ATP synthesis in the catalytic domain of F(1) is coupled via a rotary mechanism of the central stalk subunits to proton translocation. Key component of the proton channel; it may play a direct role in the translocation of protons across the membrane. The protein is ATP synthase subunit a (ATP6) of Marchantia polymorpha (Common liverwort).